The primary structure comprises 103 residues: Small ribosomal subunit protein uS10 (103 aa).

This sequence belongs to the universal ribosomal protein uS10 family. As to quaternary structure, part of the 30S ribosomal subunit.

Involved in the binding of tRNA to the ribosomes. The chain is Small ribosomal subunit protein uS10 from Alcanivorax borkumensis (strain ATCC 700651 / DSM 11573 / NCIMB 13689 / SK2).